A 168-amino-acid chain; its full sequence is MALLIEDKKQIVAEVSEVASKAFAAVVADYQGLSVEQLTTLRVEARKLGVTTRIVRNTLAKRAFQGTQFDILNDNLVGPTILGFSTSEDDMGAAARLFEEFAKTNKAFELKAAAFDGKVYQGADVSVIANLPNQEKALTMLASVLQAPISKLGRLITALKEKNESEAA.

The protein belongs to the universal ribosomal protein uL10 family. In terms of assembly, part of the ribosomal stalk of the 50S ribosomal subunit. The N-terminus interacts with L11 and the large rRNA to form the base of the stalk. The C-terminus forms an elongated spine to which L12 dimers bind in a sequential fashion forming a multimeric L10(L12)X complex.

Forms part of the ribosomal stalk, playing a central role in the interaction of the ribosome with GTP-bound translation factors. The chain is Large ribosomal subunit protein uL10 from Acinetobacter baumannii (strain AB307-0294).